The sequence spans 333 residues: Galactinol synthase 1 (333 aa).

K104 is an active-site residue. Residues D120, D122, and H257 each coordinate Mn(2+).

It belongs to the glycosyltransferase 8 family. Galactosyltransferase subfamily. A divalent metal cation serves as cofactor. In terms of tissue distribution, expressed in source leaves, specifically in the mesophyll.

It localises to the cytoplasm. The catalysed reaction is myo-inositol + UDP-alpha-D-galactose = alpha-D-galactosyl-(1-&gt;3)-1D-myo-inositol + UDP + H(+). Its function is as follows. Major galactinol synthase mainly involved in the biosynthesis of storage raffinose family oligosaccharides (RFOs) that function as osmoprotectants. May promote plant stress tolerance. This Ajuga reptans (Bugle) protein is Galactinol synthase 1 (GOLS1).